A 224-amino-acid chain; its full sequence is 2-C-methyl-D-erythritol 4-phosphate cytidylyltransferase (224 aa).

It belongs to the IspD/TarI cytidylyltransferase family. IspD subfamily.

It carries out the reaction 2-C-methyl-D-erythritol 4-phosphate + CTP + H(+) = 4-CDP-2-C-methyl-D-erythritol + diphosphate. Its pathway is isoprenoid biosynthesis; isopentenyl diphosphate biosynthesis via DXP pathway; isopentenyl diphosphate from 1-deoxy-D-xylulose 5-phosphate: step 2/6. Its function is as follows. Catalyzes the formation of 4-diphosphocytidyl-2-C-methyl-D-erythritol from CTP and 2-C-methyl-D-erythritol 4-phosphate (MEP). This is 2-C-methyl-D-erythritol 4-phosphate cytidylyltransferase from Caldicellulosiruptor bescii (strain ATCC BAA-1888 / DSM 6725 / KCTC 15123 / Z-1320) (Anaerocellum thermophilum).